The chain runs to 32 residues: Acatoxin 1 (32 aa).

Cystine bridges form between C1–C15, C8–C20, and C14–C26.

The protein resides in the secreted. It localises to the nematocyst. Functionally, reversibly inhibits acid-sensing ion channels (ASIC) in rat dorsal root ganglia neurons. Reversibly inhibits voltage-gated potassium channels (Kv) in rat DRG neurons. The protein is Acatoxin 1 of Anthopleura cascaia (Sea anemone).